We begin with the raw amino-acid sequence, 327 residues long: tRNA uridine(34) hydroxylase (327 aa).

Positions 122-218 (QENRCLVLDV…YGLKMGTGKW (97 aa)) constitute a Rhodanese domain. The Cysteine persulfide intermediate role is filled by Cys178.

Belongs to the TrhO family.

The catalysed reaction is uridine(34) in tRNA + AH2 + O2 = 5-hydroxyuridine(34) in tRNA + A + H2O. Catalyzes oxygen-dependent 5-hydroxyuridine (ho5U) modification at position 34 in tRNAs. The sequence is that of tRNA uridine(34) hydroxylase from Chlamydia trachomatis serovar A (strain ATCC VR-571B / DSM 19440 / HAR-13).